The following is a 431-amino-acid chain: Aspartokinase (431 aa).

It belongs to the aspartokinase family.

The catalysed reaction is L-aspartate + ATP = 4-phospho-L-aspartate + ADP. It participates in amino-acid biosynthesis; L-lysine biosynthesis via DAP pathway; (S)-tetrahydrodipicolinate from L-aspartate: step 1/4. It functions in the pathway amino-acid biosynthesis; L-methionine biosynthesis via de novo pathway; L-homoserine from L-aspartate: step 1/3. The protein operates within amino-acid biosynthesis; L-threonine biosynthesis; L-threonine from L-aspartate: step 1/5. The protein is Aspartokinase (lysC) of Chlamydia trachomatis serovar D (strain ATCC VR-885 / DSM 19411 / UW-3/Cx).